The following is a 354-amino-acid chain: uncharacterized protein (354 aa).

This sequence belongs to the asfivirus B354L family.

This is an uncharacterized protein from Ornithodoros (relapsing fever ticks).